The chain runs to 339 residues: Dual specificity protein phosphatase 12 (339 aa).

Position 1 is an N-acetylmethionine (Met1). Positions 1-25 (MLEAQGSNHGCERQAPTASPASSAG) are disordered. The region spanning 26 to 170 (HAVEVRPGLY…LKLYEAMGYE (145 aa)) is the Tyrosine-protein phosphatase domain. The active-site Phosphocysteine intermediate is the Cys114. Position 115–120 (115–120 (HAGVSR)) interacts with substrate. At Ser334 the chain carries Phosphoserine.

It belongs to the protein-tyrosine phosphatase family. Non-receptor class dual specificity subfamily. Monomer. Zn(2+) serves as cofactor.

The protein resides in the nucleus. The protein localises to the cytoplasm. It is found in the cytosol. The catalysed reaction is O-phospho-L-tyrosyl-[protein] + H2O = L-tyrosyl-[protein] + phosphate. It carries out the reaction O-phospho-L-seryl-[protein] + H2O = L-seryl-[protein] + phosphate. The enzyme catalyses O-phospho-L-threonyl-[protein] + H2O = L-threonyl-[protein] + phosphate. In terms of biological role, dual specificity phosphatase; can dephosphorylate both phosphotyrosine and phosphoserine or phosphothreonine residues. Can dephosphorylate glucokinase (in vitro). Has phosphatase activity with the synthetic substrate 6,8-difluoro-4-methylumbelliferyl phosphate and other in vitro substrates. This chain is Dual specificity protein phosphatase 12 (Dusp12), found in Mus musculus (Mouse).